A 219-amino-acid polypeptide reads, in one-letter code: Cytochrome c biogenesis ATP-binding export protein CcmA (219 aa).

In terms of domain architecture, ABC transporter spans 10–218 (ISAVNLTCIR…TLDYSYDSAV (209 aa)). 42–49 (GPNGSGKT) lines the ATP pocket.

Belongs to the ABC transporter superfamily. CcmA exporter (TC 3.A.1.107) family. In terms of assembly, the complex is composed of two ATP-binding proteins (CcmA) and two transmembrane proteins (CcmB).

Its subcellular location is the cell inner membrane. It catalyses the reaction heme b(in) + ATP + H2O = heme b(out) + ADP + phosphate + H(+). Its function is as follows. Part of the ABC transporter complex CcmAB involved in the biogenesis of c-type cytochromes; once thought to export heme, this seems not to be the case, but its exact role is uncertain. Responsible for energy coupling to the transport system. This Colwellia psychrerythraea (strain 34H / ATCC BAA-681) (Vibrio psychroerythus) protein is Cytochrome c biogenesis ATP-binding export protein CcmA.